We begin with the raw amino-acid sequence, 428 residues long: Type II methyltransferase M.TthHB8I (428 aa).

The disordered stretch occupies residues 407–428 (RKGNTERRKHGPYTSPESAGSF).

This sequence belongs to the N(4)/N(6)-methyltransferase family.

The enzyme catalyses a 2'-deoxyadenosine in DNA + S-adenosyl-L-methionine = an N(6)-methyl-2'-deoxyadenosine in DNA + S-adenosyl-L-homocysteine + H(+). Functionally, a gamma subtype methylase, recognizes the double-stranded sequence 5'-TCGA-3', methylates A-4 on both strands and protects the DNA from cleavage by the TthHB8I endonuclease. The polypeptide is Type II methyltransferase M.TthHB8I (Thermus thermophilus (strain ATCC 27634 / DSM 579 / HB8)).